We begin with the raw amino-acid sequence, 280 residues long: UPF0276 protein CC_3255 (280 aa).

It belongs to the UPF0276 family.

This is UPF0276 protein CC_3255 from Caulobacter vibrioides (strain ATCC 19089 / CIP 103742 / CB 15) (Caulobacter crescentus).